Consider the following 64-residue polypeptide: MPKMKTNSAASKRAKITGTGKVKHVGSAMRHNLEHKSARKRRELSADDVLRGGQAKKLHQLLQK.

Residues 1 to 10 are compositionally biased toward polar residues; sequence MPKMKTNSAA. Positions 1–64 are disordered; that stretch reads MPKMKTNSAA…AKKLHQLLQK (64 aa). Basic residues predominate over residues 54–64; the sequence is QAKKLHQLLQK.

The protein belongs to the bacterial ribosomal protein bL35 family.

This chain is Large ribosomal subunit protein bL35, found in Bifidobacterium longum (strain NCC 2705).